The primary structure comprises 670 residues: DNA ligase (670 aa).

Residues 33-37 (DAEYD), 82-83 (SL), and E114 each bind NAD(+). The active-site N6-AMP-lysine intermediate is K116. R137, E173, K291, and K315 together coordinate NAD(+). 4 residues coordinate Zn(2+): C409, C412, C427, and C433. Positions 592–670 (VQSDRLSGNT…ENALAELLSD (79 aa)) constitute a BRCT domain.

It belongs to the NAD-dependent DNA ligase family. LigA subfamily. Mg(2+) serves as cofactor. Requires Mn(2+) as cofactor.

It catalyses the reaction NAD(+) + (deoxyribonucleotide)n-3'-hydroxyl + 5'-phospho-(deoxyribonucleotide)m = (deoxyribonucleotide)n+m + AMP + beta-nicotinamide D-nucleotide.. In terms of biological role, DNA ligase that catalyzes the formation of phosphodiester linkages between 5'-phosphoryl and 3'-hydroxyl groups in double-stranded DNA using NAD as a coenzyme and as the energy source for the reaction. It is essential for DNA replication and repair of damaged DNA. The chain is DNA ligase from Idiomarina loihiensis (strain ATCC BAA-735 / DSM 15497 / L2-TR).